The following is a 337-amino-acid chain: Ornithine carbamoyltransferase, catabolic (337 aa).

Carbamoyl phosphate-binding positions include 57–60 (STRT), glutamine 84, arginine 108, and 135–138 (HPTQ). L-ornithine is bound by residues asparagine 167, aspartate 231, and 235–236 (SM). Residues 272–273 (CL) and arginine 317 each bind carbamoyl phosphate.

Belongs to the aspartate/ornithine carbamoyltransferase superfamily. OTCase family.

The protein localises to the cytoplasm. It carries out the reaction carbamoyl phosphate + L-ornithine = L-citrulline + phosphate + H(+). It participates in amino-acid degradation; L-arginine degradation via ADI pathway; carbamoyl phosphate from L-arginine: step 2/2. Reversibly catalyzes the transfer of the carbamoyl group from carbamoyl phosphate (CP) to the N(epsilon) atom of ornithine (ORN) to produce L-citrulline. This is Ornithine carbamoyltransferase, catabolic from Streptococcus ratti.